Reading from the N-terminus, the 495-residue chain is EF-hand calcium-binding domain-containing protein 14 (495 aa).

Disordered stretches follow at residues 1–50 (MKKR…EEEE) and 381–404 (TNKP…FTSK). At Ser-17 the chain carries Phosphoserine. Residues 18-31 (RRKKPKKGPSSHRL) are compositionally biased toward basic residues. Residues 37-50 (PDSDSESSSEEEEE) show a composition bias toward acidic residues. 2 EF-hand domains span residues 434 to 463 (SSTE…WTSL) and 464 to 495 (GSAM…ALGI). Positions 477, 479, 481, 483, and 488 each coordinate Ca(2+).

This is EF-hand calcium-binding domain-containing protein 14 (EFCAB14) from Homo sapiens (Human).